Reading from the N-terminus, the 199-residue chain is MAFTQPPLPFPKDALEPYGMKAETFDYHYGKHHAAYVTNLNKLVEGTPMESLSLEDVIKQSFGDSSKVGVFNNAAQVWNHTFFWNCLKAGGGGAPTGELAAKIDAAFGSLDKFKEEFSNAAATQFGSGWAWLVDDGGTLKVTKTPNAENPLVHGQKPLLTLDVWEHAYYLDFQNARPAFIKNFLDNLVNWDFVAQNLAA.

Fe cation is bound by residues H28, H80, D162, and H166.

This sequence belongs to the iron/manganese superoxide dismutase family. In terms of assembly, homodimer. The cofactor is Fe cation.

The protein resides in the cytoplasm. It catalyses the reaction 2 superoxide + 2 H(+) = H2O2 + O2. Functionally, destroys superoxide anion radicals which are normally produced within the cells and which are toxic to biological systems. The chain is Superoxide dismutase [Fe] (sodB) from Leptolyngbya boryana (Plectonema boryanum).